Consider the following 268-residue polypeptide: MKRVALLVQYDGSYFSGWQRQKNAISVQEMIEDALFKVSNQMIKTFAAGRTDSGVHASGQVVHFDIDFVIPSDRYANVLNSRLPSTIRILESVEVKKNWHACYSAVYRHYRYVINNSKIPNLFLNKWSWHRYQKSLDEFLMSKALNGMIGEHDFYAFQKSGSTRSTSVTTIKSIEIERTEDLILIDIKATGFLYGMVRSIVGQLVLVGEKKISPEIFKDRWVGKKKQDVHESAPANGLCFVNSVYQETIFKRIDKNDLFPKFVIRGYS.

Residue aspartate 52 is the Nucleophile of the active site. Residue tyrosine 110 participates in substrate binding.

The protein belongs to the tRNA pseudouridine synthase TruA family. As to quaternary structure, homodimer.

The enzyme catalyses uridine(38/39/40) in tRNA = pseudouridine(38/39/40) in tRNA. Its function is as follows. Formation of pseudouridine at positions 38, 39 and 40 in the anticodon stem and loop of transfer RNAs. This chain is tRNA pseudouridine synthase A, found in Prochlorococcus marinus (strain MIT 9515).